A 183-amino-acid chain; its full sequence is Ly6/PLAUR domain-containing protein 6B (183 aa).

The signal sequence occupies residues 1–39 (MLYKSSDRPAHKVSMLLLCHALAIAVVQIVIFSESWAFA). A UPAR/Ly6 domain is found at 60-151 (FKCFTCENAG…VELPTNHTNA (92 aa)). The tract at residues 60 to 154 (FKCFTCENAG…PTNHTNAVFA (95 aa)) is sufficient for inhibiting alpha-7 nAChR currents. 6 cysteine pairs are disulfide-bonded: cysteine 62–cysteine 90, cysteine 65–cysteine 74, cysteine 83–cysteine 109, cysteine 115–cysteine 134, cysteine 120–cysteine 131, and cysteine 135–cysteine 140. Residue serine 164 is the site of GPI-anchor amidated serine attachment. Residues 165-183 (SAPTLYLPVLAWVFVLPLL) constitute a propeptide, removed in mature form.

The protein resides in the cell membrane. Likely acts as a modulator of nicotinic acetylcholine receptors (nAChRs) activity. In vitro acts on nAChRs in a subtype- and stoichiometry-dependent manner. Modulates specifically alpha-3(3):beta-4(2) nAChRs by enhancing the sensitivity to ACh, decreasing ACh-induced maximal current response and increasing the rate of desensitization to ACh; has no effect on alpha-7 homomeric nAChRs; modulates alpha-3(2):alpha-5:beta-4(2) nAChRs in the context of CHRNA5/alpha-5 variant Asn-398 but not its wild-type sequence. However, according to another report in vitro it can weakly inhibits alpha-7 nAChRs. This is Ly6/PLAUR domain-containing protein 6B (LYPD6B) from Homo sapiens (Human).